The following is a 388-amino-acid chain: Staphopain A (388 aa).

Positions 1–25 (MKRNFPKLIALSLIFSLSVTPIANA) are cleaved as a signal peptide. The propeptide occupies 26 to 214 (ESNSNIKAKD…TSQFKSNNYT (189 aa)). Active-site residues include Cys-238, His-334, and Asn-355.

This sequence belongs to the peptidase C47 family. In terms of assembly, in the cytoplasm, prematurely activated/folded ScpA forms a stable non-covalent complex with ScpB. In terms of processing, cleavage leads to the activation of ScpA probably by an auto-catalytic manner.

The protein resides in the secreted. It carries out the reaction Broad endopeptidase action on proteins including elastin, but rather limited hydrolysis of small-molecule substrates. Assays are conveniently made with hemoglobin, casein or Z-Phe-Arg-NHMec as substrate.. Its activity is regulated as follows. Prematurely activated/folded staphopain A is inhibited by staphostatin A (ScpB), which is probably required to protect staphylococcal cytoplasmic proteins from degradation by ScpA. Cysteine protease that plays an important role in the inhibition of host innate immune response. Cleaves host elastins found in connective tissues, pulmonary surfactant protein A in the lungs, and the chemokine receptor CXCR2 on leukocytes. Proteolytic cleavage of surfactant protein A impairs bacterial phagocytosis by neutrophils while CXCR2 degradation blocks neutrophil activation and chemotaxis. Additionally, promotes vascular leakage by activating the plasma kallikerin/kinin system, resulting in hypotension. The polypeptide is Staphopain A (sspP) (Staphylococcus aureus (strain COL)).